Consider the following 418-residue polypeptide: 6-methylpretetramide 4-monooxygenase (418 aa).

FAD is bound by residues 15–44 (DVCVVGGGPAGLTLALLMLRSGARVTLVER) and 289–299 (WARDGLLLIGD).

Belongs to the PheA/TfdB FAD monooxygenase family. The cofactor is FAD.

It catalyses the reaction 6-methylpretetramide + NADPH + O2 + 2 H(+) = 4-hydroxy-6-methylpretetramide + NADP(+) + H2O. It participates in antibiotic biosynthesis; oxytetracycline biosynthesis. Functionally, involved in the biosynthesis of the tetracycline antibiotic, oxytetracycline. Catalyzes the C-4 hydroxylation of 6-methylpretetramide to yield the intermediate 4-hydroxyl-6-methylpretetramid, which is subsequently hydroxylated by OxyL to yield 4-keto-anhydrotetracycline. OxyE serves as the ancillary enzyme to assist OxyL in the hydroxylation of C-4. The polypeptide is 6-methylpretetramide 4-monooxygenase (Streptomyces rimosus).